The sequence spans 113 residues: ATP-dependent Clp protease adapter protein ClpS (113 aa).

The span at 1–11 (MTRPTIPPGPP) shows a compositional bias: pro residues. 2 disordered regions span residues 1 to 24 (MTRP…ERTE) and 92 to 113 (TAHA…SEGE).

This sequence belongs to the ClpS family. In terms of assembly, binds to the N-terminal domain of the chaperone ClpA.

In terms of biological role, involved in the modulation of the specificity of the ClpAP-mediated ATP-dependent protein degradation. This is ATP-dependent Clp protease adapter protein ClpS from Deinococcus radiodurans (strain ATCC 13939 / DSM 20539 / JCM 16871 / CCUG 27074 / LMG 4051 / NBRC 15346 / NCIMB 9279 / VKM B-1422 / R1).